The following is a 247-amino-acid chain: Adenosylcobinamide-GDP ribazoletransferase (247 aa).

5 helical membrane-spanning segments follow: residues 1–21 (MLRLYFVALQFLAIIPIPFSF), 37–57 (LVGLTLGLLLAGCDYLLALAL), 61–81 (VADLLLVAILALVTGALHLDG), 109–129 (AVGVVGLVLALLLKYQALFAV), and 176–196 (VAVAAFFTVVTGWLLLGLPGI).

It belongs to the CobS family. Requires Mg(2+) as cofactor.

The protein localises to the cell inner membrane. It carries out the reaction alpha-ribazole + adenosylcob(III)inamide-GDP = adenosylcob(III)alamin + GMP + H(+). It catalyses the reaction alpha-ribazole 5'-phosphate + adenosylcob(III)inamide-GDP = adenosylcob(III)alamin 5'-phosphate + GMP + H(+). It participates in cofactor biosynthesis; adenosylcobalamin biosynthesis; adenosylcobalamin from cob(II)yrinate a,c-diamide: step 7/7. Its function is as follows. Joins adenosylcobinamide-GDP and alpha-ribazole to generate adenosylcobalamin (Ado-cobalamin). Also synthesizes adenosylcobalamin 5'-phosphate from adenosylcobinamide-GDP and alpha-ribazole 5'-phosphate. In Geotalea daltonii (strain DSM 22248 / JCM 15807 / FRC-32) (Geobacter daltonii), this protein is Adenosylcobinamide-GDP ribazoletransferase.